Consider the following 550-residue polypeptide: Aspartate--tRNA ligase (550 aa).

Glu-162 contacts L-aspartate. The tract at residues 186–189 (QIYK) is aspartate. Arg-208 lines the L-aspartate pocket. ATP is bound by residues 208–210 (RDE) and Gln-217. An L-aspartate-binding site is contributed by His-417. ATP is bound at residue Glu-451. An L-aspartate-binding site is contributed by Arg-458. 499-502 (GIDR) is an ATP binding site.

This sequence belongs to the class-II aminoacyl-tRNA synthetase family. Type 1 subfamily. Homodimer.

The protein resides in the cytoplasm. The catalysed reaction is tRNA(Asp) + L-aspartate + ATP = L-aspartyl-tRNA(Asp) + AMP + diphosphate. Catalyzes the attachment of L-aspartate to tRNA(Asp) in a two-step reaction: L-aspartate is first activated by ATP to form Asp-AMP and then transferred to the acceptor end of tRNA(Asp). In Mycoplasma genitalium (strain ATCC 33530 / DSM 19775 / NCTC 10195 / G37) (Mycoplasmoides genitalium), this protein is Aspartate--tRNA ligase.